Reading from the N-terminus, the 75-residue chain is Large ribosomal subunit protein bL31 (75 aa).

This sequence belongs to the bacterial ribosomal protein bL31 family. Type A subfamily. In terms of assembly, part of the 50S ribosomal subunit.

In terms of biological role, binds the 23S rRNA. This is Large ribosomal subunit protein bL31 from Sphingopyxis alaskensis (strain DSM 13593 / LMG 18877 / RB2256) (Sphingomonas alaskensis).